The sequence spans 784 residues: Cyclin-dependent kinase 11B (784 aa).

The segment covering 18 to 60 (QEKKRRKEQEEKAEIKRLKNSDDRDSKRDSLEEGELRDHRMEI) has biased composition (basic and acidic residues). Positions 18–401 (QEKKRRKEQE…EGDYVPDSPA (384 aa)) are disordered. Phosphoserine occurs at positions 47 and 72. Over residues 95–113 (EKAHHRKDEKRKEKRRHRS) the composition is skewed to basic residues. Basic and acidic residues-rich tracts occupy residues 114–131 (HSAE…EREH), 138–227 (REEQ…DKGK), and 238–263 (PPRE…RDLL). S115 bears the Phosphoserine mark. S270 bears the Phosphoserine mark. The span at 278-289 (SAESSSAESGSG) shows a compositional bias: low complexity. 2 stretches are compositionally biased toward acidic residues: residues 290–353 (SEEE…EDRE) and 372–381 (DSEEGEEEVG). Residues 427–712 (FQCLNRIEEG…AEDGLKHEYF (286 aa)) form the Protein kinase domain. ATP contacts are provided by residues 433 to 441 (IEEGTYGVV) and K456. Position 471 is a phosphoserine; by CDK7 (S471). Phosphothreonine; by CDK7 is present on T477. D551 serves as the catalytic Proton acceptor. At S578 the chain carries Phosphoserine. Phosphotyrosine is present on Y583. T584 bears the Phosphothreonine mark. K630 participates in a covalent cross-link: Glycyl lysine isopeptide (Lys-Gly) (interchain with G-Cter in SUMO2). Residues 722–784 (SMFPTWPAKS…AAGPGFSLKF (63 aa)) form a disordered region. T740 carries the post-translational modification Phosphothreonine. Position 741 is a phosphoserine (S741).

It belongs to the protein kinase superfamily. CMGC Ser/Thr protein kinase family. CDC2/CDKX subfamily. In terms of assembly, may interact PAK1 and RANBP9. p110C interacts with RNPS1. Interacts with CCND3. Interacts with CCNL1 and CCNL2. Forms complexes with pre-mRNA-splicing factors, including at least SRSF1, SRSF2 AND SRSF7/SLU7. The cofactor is Mg(2+). Post-translationally, phosphorylation at Ser-115 creates a binding site for 14-3-3 proteins.

The enzyme catalyses L-seryl-[protein] + ATP = O-phospho-L-seryl-[protein] + ADP + H(+). It carries out the reaction L-threonyl-[protein] + ATP = O-phospho-L-threonyl-[protein] + ADP + H(+). With respect to regulation, phosphorylation at Thr-437 or Tyr-438 inactivates the enzyme, while phosphorylation at Thr-584 activates it. In terms of biological role, plays multiple roles in cell cycle progression, cytokinesis and apoptosis. Involved in pre-mRNA splicing in a kinase activity-dependent manner. May act as a negative regulator of normal cell cycle progression. This chain is Cyclin-dependent kinase 11B (Cdk11b), found in Mus musculus (Mouse).